A 216-amino-acid chain; its full sequence is Ras-related protein RabN1 (216 aa).

15-22 (GDYNSGKT) provides a ligand contact to GTP. An Effector region motif is present at residues 37 to 44 (TCPSTFDL). Residues 62–66 (DTAGQ) and 128–131 (TKSD) contribute to the GTP site. Cys216 carries S-geranylgeranyl cysteine lipidation.

Belongs to the small GTPase superfamily. Rab family.

It is found in the cell membrane. This chain is Ras-related protein RabN1 (rabN1), found in Dictyostelium discoideum (Social amoeba).